The sequence spans 315 residues: Ribose-phosphate pyrophosphokinase (315 aa).

Residues 37–39 (DGE) and 96–97 (RQ) each bind ATP. Mg(2+) contacts are provided by His131 and Asp171. The active site involves Lys195. Residues Arg197, Asp221, and 225–229 (DTGGT) each bind D-ribose 5-phosphate.

It belongs to the ribose-phosphate pyrophosphokinase family. Class I subfamily. As to quaternary structure, homohexamer. Mg(2+) serves as cofactor.

The protein localises to the cytoplasm. The enzyme catalyses D-ribose 5-phosphate + ATP = 5-phospho-alpha-D-ribose 1-diphosphate + AMP + H(+). It functions in the pathway metabolic intermediate biosynthesis; 5-phospho-alpha-D-ribose 1-diphosphate biosynthesis; 5-phospho-alpha-D-ribose 1-diphosphate from D-ribose 5-phosphate (route I): step 1/1. Its function is as follows. Involved in the biosynthesis of the central metabolite phospho-alpha-D-ribosyl-1-pyrophosphate (PRPP) via the transfer of pyrophosphoryl group from ATP to 1-hydroxyl of ribose-5-phosphate (Rib-5-P). This Haemophilus influenzae (strain ATCC 51907 / DSM 11121 / KW20 / Rd) protein is Ribose-phosphate pyrophosphokinase.